The following is a 596-amino-acid chain: V-type ATP synthase alpha chain (596 aa).

Position 233-240 (233-240 (GPFGAGKT)) interacts with ATP.

It belongs to the ATPase alpha/beta chains family.

It carries out the reaction ATP + H2O + 4 H(+)(in) = ADP + phosphate + 5 H(+)(out). Produces ATP from ADP in the presence of a proton gradient across the membrane. The V-type alpha chain is a catalytic subunit. This Streptococcus sanguinis (strain SK36) protein is V-type ATP synthase alpha chain.